A 995-amino-acid polypeptide reads, in one-letter code: tRNA wybutosine-synthesizing protein 2/3/4 (995 aa).

A tRNA wybutosine-synthesizing protein 3 homolog region spans residues 1-212; sequence MDFEKRKAAT…GFSVALASNG (212 aa). Kelch repeat units follow at residues 284–335, 336–386, 387–436, 437–486, and 488–535; these read EVIV…MVGD, FMFV…SVGT, KVYI…AYGS, QSFM…VYKH, and IGII…SILG. The segment at 661-995 is tRNA wybutosine-synthesizing protein 2 homolog; sequence ERSEENNLTK…RHLVADVRCR (335 aa). Residues Lys828 and 896-897 contribute to the S-adenosyl-L-methionine site; that span reads DN.

In the C-terminal section; belongs to the class I-like SAM-binding methyltransferase superfamily. TRM5/TYW2 family. The protein in the N-terminal section; belongs to the TYW3 family.

It catalyses the reaction 4-demethyl-7-[(3S)-3-amino-3-carboxypropyl]wyosine(37) in tRNA(Phe) + S-adenosyl-L-methionine = 7-[(3S)-3-amino-3-carboxypropyl]wyosine(37) in tRNA(Phe) + S-adenosyl-L-homocysteine + H(+). The enzyme catalyses 4-demethylwyosine(37) in tRNA(Phe) + S-adenosyl-L-methionine = 4-demethyl-7-[(3S)-3-amino-3-carboxypropyl]wyosine(37) in tRNA(Phe) + S-methyl-5'-thioadenosine + H(+). It participates in tRNA modification; wybutosine-tRNA(Phe) biosynthesis. Its function is as follows. S-adenosyl-L-methionine-dependent transferase that acts as a component of the wybutosine biosynthesis pathway. Wybutosine is a hyper modified guanosine with a tricyclic base found at the 3'-position adjacent to the anticodon of eukaryotic phenylalanine tRNA. This is tRNA wybutosine-synthesizing protein 2/3/4 from Arabidopsis thaliana (Mouse-ear cress).